Reading from the N-terminus, the 64-residue chain is Prokaryotic ubiquitin-like protein Pup (64 aa).

The span at 1 to 10 shows a compositional bias: polar residues; sequence MNQNGSQIHS. Positions 1 to 32 are disordered; sequence MNQNGSQIHSDGNGHSDDTDTPGVSAGQVSVN. An ARC ATPase binding region spans residues 20–58; the sequence is DTPGVSAGQVSVNTAGVDDLLDEIDGLLESNAEEFVRSY. Position 64 is a deamidated glutamine (Gln-64). Gln-64 participates in a covalent cross-link: Isoglutamyl lysine isopeptide (Gln-Lys) (interchain with K-? in acceptor proteins).

This sequence belongs to the prokaryotic ubiquitin-like protein family. Strongly interacts with the proteasome-associated ATPase ARC through a hydrophobic interface; the interacting region of Pup lies in its C-terminal half. There is one Pup binding site per ARC hexamer ring. Is modified by deamidation of its C-terminal glutamine to glutamate by the deamidase Dop, a prerequisite to the subsequent pupylation process.

It functions in the pathway protein degradation; proteasomal Pup-dependent pathway. Protein modifier that is covalently attached to lysine residues of substrate proteins, thereby targeting them for proteasomal degradation. The tagging system is termed pupylation. In Corynebacterium diphtheriae (strain ATCC 700971 / NCTC 13129 / Biotype gravis), this protein is Prokaryotic ubiquitin-like protein Pup.